The following is an 83-amino-acid chain: U4-theraphotoxin-Hhn1x (83 aa).

Positions 1 to 20 (MTLIAILTCAAALVLHTTAA) are cleaved as a signal peptide. Positions 21–46 (EELEAESQLMEVGMPDTELEAVDEER) are excised as a propeptide. Intrachain disulfides connect Cys50-Cys64, Cys54-Cys75, and Cys69-Cys80.

It belongs to the neurotoxin 12 (Hwtx-2) family. 02 (Hwtx-2) subfamily. As to expression, expressed by the venom gland.

The protein resides in the secreted. In terms of biological role, postsynaptic neurotoxin. The sequence is that of U4-theraphotoxin-Hhn1x from Cyriopagopus hainanus (Chinese bird spider).